A 512-amino-acid polypeptide reads, in one-letter code: Metal transporter Nramp4 (512 aa).

12 helical membrane passes run 52–72 (LWLFTGPGFLMSIAFLDPGNL), 80–100 (AIAGYSLIWLLMWATAIGLLI), 129–149 (MVLWIMAEIALIGADIQEVIG), 161–181 (LVPLWAGVVITALDCFIFLFL), 189–209 (LEAVFAILIATMALAFAWMFG), 235–255 (AVGIVGCIIMPHNVFLHSALV), 277–297 (IESTGALAVSFIINVFVTTVF), 323–343 (YGGGFFPILYIWAIGVLAAGQ), 371–391 (ALITRSCAIIPTMIVALVFDS), 402–422 (WLNVLQSVQIPFAVIPLLCLV), 440–460 (ISWIVAALVIAINGYLMVDFF), and 468–488 (ILLVPVIIFAIAYVVFVLYLI).

It belongs to the NRAMP (TC 2.A.55) family. Expressed in vascular tissues.

It localises to the vacuole membrane. Its function is as follows. Vacuolar metal transporter involved in intracellular metal homeostasis. Can transport iron (Fe), manganese (Mn) and cadmium (Cd). Regulates metal accumulation under Fe starvation. Acts redundantly with NRAMP3 to mobilize vacuolar Fe and provide sufficient Fe during seed germination. In association with NRAMP3, required for optimal growth and photosynthesis under Mn deficiency. Exports Mn from vacuoles in leaf mesophyll cells, making Mn available for functional photosystem II in chloroplasts. This Arabidopsis thaliana (Mouse-ear cress) protein is Metal transporter Nramp4 (NRAMP4).